Here is a 154-residue protein sequence, read N- to C-terminus: Keratin-associated protein 9-4 (154 aa).

Tandem repeats lie at residues 8–12 (CCQPT), 13–17 (CCRTT), 18–22 (CCRTT), 37–41 (CCQPS), 42–46 (CCVSS), 51–55 (CCRPT), 56–60 (CCQNT), 61–65 (CCQPT), 70–74 (CCQPS), 75–79 (CCSTP), 80–84 (CCQPT), 85–89 (CCGSS), 129–133 (CCRPA), 134–138 (CCETT), and 148–152 (CCQPF). A 15 X 5 AA repeats of C-C-[RQVGE]-[SPTN]-[TASPF] region spans residues 8–152 (CCQPTCCRTT…TCVSSCCQPF (145 aa)).

The protein belongs to the KRTAP type 9 family. Interacts with hair keratins.

In terms of biological role, in the hair cortex, hair keratin intermediate filaments are embedded in an interfilamentous matrix, consisting of hair keratin-associated proteins (KRTAP), which are essential for the formation of a rigid and resistant hair shaft through their extensive disulfide bond cross-linking with abundant cysteine residues of hair keratins. The matrix proteins include the high-sulfur and high-glycine-tyrosine keratins. The sequence is that of Keratin-associated protein 9-4 (KRTAP9-4) from Homo sapiens (Human).